Here is a 1077-residue protein sequence, read N- to C-terminus: ATP-dependent helicase/deoxyribonuclease subunit B (1077 aa).

This sequence belongs to the helicase family. AddB/RexB type 2 subfamily. As to quaternary structure, heterodimer of AddA and RexB. Mg(2+) is required as a cofactor.

Its function is as follows. The heterodimer acts as both an ATP-dependent DNA helicase and an ATP-dependent, dual-direction single-stranded exonuclease. Recognizes the chi site generating a DNA molecule suitable for the initiation of homologous recombination. This subunit has 5' -&gt; 3' nuclease activity but not helicase activity. The polypeptide is ATP-dependent helicase/deoxyribonuclease subunit B (Streptococcus agalactiae serotype Ia (strain ATCC 27591 / A909 / CDC SS700)).